Consider the following 794-residue polypeptide: Zinc finger protein 148 (794 aa).

Residue Lys6 forms a Glycyl lysine isopeptide (Lys-Gly) (interchain with G-Cter in SUMO2) linkage. Phosphoserine is present on Ser51. Glycyl lysine isopeptide (Lys-Gly) (interchain with G-Cter in SUMO2) cross-links involve residues Lys88, Lys115, and Lys132. The C2H2-type 1 zinc-finger motif lies at His171–His193. Residue Thr194 is modified to Phosphothreonine. 2 C2H2-type zinc fingers span residues Phe199 to His221 and Phe227 to His249. Position 250 is a phosphoserine (Ser250). The C2H2-type 4 zinc-finger motif lies at Tyr255–His278. A Glycyl lysine isopeptide (Lys-Gly) (interchain with G-Cter in SUMO2) cross-link involves residue Lys291. A disordered region spans residues Glu298–Ser336. Residues Ser301 and Ser306 each carry the phosphoserine modification. Lys308 is covalently cross-linked (Glycyl lysine isopeptide (Lys-Gly) (interchain with G-Cter in SUMO2)). The span at Glu321–Ser336 shows a compositional bias: basic and acidic residues. Lys356 is covalently cross-linked (Glycyl lysine isopeptide (Lys-Gly) (interchain with G-Cter in SUMO1); alternate). Lys356 is covalently cross-linked (Glycyl lysine isopeptide (Lys-Gly) (interchain with G-Cter in SUMO2); alternate). A Glycyl lysine isopeptide (Lys-Gly) (interchain with G-Cter in SUMO2) cross-link involves residue Lys402. Residue Ser412 is modified to Phosphoserine. Glycyl lysine isopeptide (Lys-Gly) (interchain with G-Cter in SUMO2) cross-links involve residues Lys421 and Lys424. Residues Asn574 to Gly588 are compositionally biased toward polar residues. The segment at Asn574–Ala599 is disordered. The residue at position 607 (Lys607) is an N6-acetyllysine. Phosphoserine is present on residues Ser665 and Ser784.

The protein belongs to the krueppel C2H2-type zinc-finger protein family. In terms of assembly, interacts with HNRNPDL. Interacts with the 5FMC complex; the interaction requires association with CHTOP. Interacts with CAVIN1. In terms of processing, sumoylated with SUMO2. Desumoylated by SENP3, resulting in the stimulation of transcription of its target genes. In terms of tissue distribution, strong expression detected in brain, lung, liver and kidney, with lower levels detected in spleen, skeletal muscle, testis and heart.

It localises to the nucleus. Its function is as follows. Involved in transcriptional regulation. Represses the transcription of a number of genes including gastrin, stromelysin and enolase. Binds to the G-rich box in the enhancer region of these genes. The polypeptide is Zinc finger protein 148 (Znf148) (Mus musculus (Mouse)).